We begin with the raw amino-acid sequence, 165 residues long: 6,7-dimethyl-8-ribityllumazine synthase (165 aa).

5-amino-6-(D-ribitylamino)uracil contacts are provided by residues phenylalanine 24, 62–64 (AFE), and 86–88 (AVI). 91–92 (DT) provides a ligand contact to (2S)-2-hydroxy-3-oxobutyl phosphate. The active-site Proton donor is the histidine 94. Position 119 (phenylalanine 119) interacts with 5-amino-6-(D-ribitylamino)uracil. Arginine 133 provides a ligand contact to (2S)-2-hydroxy-3-oxobutyl phosphate.

It belongs to the DMRL synthase family.

It catalyses the reaction (2S)-2-hydroxy-3-oxobutyl phosphate + 5-amino-6-(D-ribitylamino)uracil = 6,7-dimethyl-8-(1-D-ribityl)lumazine + phosphate + 2 H2O + H(+). Its pathway is cofactor biosynthesis; riboflavin biosynthesis; riboflavin from 2-hydroxy-3-oxobutyl phosphate and 5-amino-6-(D-ribitylamino)uracil: step 1/2. Its function is as follows. Catalyzes the formation of 6,7-dimethyl-8-ribityllumazine by condensation of 5-amino-6-(D-ribitylamino)uracil with 3,4-dihydroxy-2-butanone 4-phosphate. This is the penultimate step in the biosynthesis of riboflavin. The polypeptide is 6,7-dimethyl-8-ribityllumazine synthase (Prochlorococcus marinus (strain MIT 9313)).